We begin with the raw amino-acid sequence, 151 residues long: Small ribosomal subunit protein uS15 (151 aa).

Belongs to the universal ribosomal protein uS15 family.

The sequence is that of Small ribosomal subunit protein uS15 (RPS13) from Glycine max (Soybean).